A 329-amino-acid chain; its full sequence is MSAFDTNPFADPVDVNPFQDPSVTQLTNAPQSGLAEFNPFSETNAATTVPATQAPGPSQPAVLQPSVEPAQPTPQAVAAAAQAGLLRQQEELDRKAAELERKERELQNTAANLHVRDNNWPPLPSWCPVKPCFYQDFSTEIPADYQRICKMLYYLWMLHSVTLFLNLLACLAWFTSDAANGTAFGLSILWFLIFTPCAFLCWYRPIYKAFRSDNSFSFFVFFFVFFCQIGIYFIQLIGLPNLGTSGWLAALSTMKNGPLAVTIIMMVVAGFFTLCAGLSLFLLQRVHAFYRRTGASFQQAQEEFSQGIFSSRTFRGAASSAARGAFQGN.

Residues 1 to 74 form a disordered region; that stretch reads MSAFDTNPFA…PSVEPAQPTP (74 aa). At 1 to 153 the chain is on the cytoplasmic side; the sequence is MSAFDTNPFA…DYQRICKMLY (153 aa). 2 stretches are compositionally biased toward polar residues: residues 19–31 and 40–51; these read QDPS…NAPQ and FSETNAATTVPA. The chain crosses the membrane as a helical span at residues 154–174; that stretch reads YLWMLHSVTLFLNLLACLAWF. Over 175–181 the chain is Lumenal; the sequence is TSDAANG. The helical transmembrane segment at 182-202 threads the bilayer; that stretch reads TAFGLSILWFLIFTPCAFLCW. Topologically, residues 203–218 are cytoplasmic; that stretch reads YRPIYKAFRSDNSFSF. Residues 203-218 form an interaction with SLC9A7 region; sequence YRPIYKAFRSDNSFSF. A helical membrane pass occupies residues 219–239; sequence FVFFFVFFCQIGIYFIQLIGL. At 240 to 262 the chain is on the lumenal side; that stretch reads PNLGTSGWLAALSTMKNGPLAVT. A helical transmembrane segment spans residues 263–283; it reads IIMMVVAGFFTLCAGLSLFLL. At 284 to 329 the chain is on the cytoplasmic side; the sequence is QRVHAFYRRTGASFQQAQEEFSQGIFSSRTFRGAASSAARGAFQGN. Ser-319 and Ser-320 each carry phosphoserine.

It belongs to the SCAMP family. As to quaternary structure, interacts with SLC6A4 and SLC9A7. Interacts with SLC9A5; this interaction regulates SLC9A5 cell-surface targeting and SLC9A5 activity.

It localises to the golgi apparatus. The protein resides in the trans-Golgi network membrane. The protein localises to the recycling endosome membrane. Its function is as follows. Functions in post-Golgi recycling pathways. Acts as a recycling carrier to the cell surface. The chain is Secretory carrier-associated membrane protein 2 (Scamp2) from Mus musculus (Mouse).